Reading from the N-terminus, the 209-residue chain is Orotate phosphoribosyltransferase (209 aa).

5-phospho-alpha-D-ribose 1-diphosphate contacts are provided by residues Arg96, Lys100, His102, and 122–130 (EDLISTGKS). Ser126 contacts orotate.

The protein belongs to the purine/pyrimidine phosphoribosyltransferase family. PyrE subfamily. In terms of assembly, homodimer. Mg(2+) is required as a cofactor.

The catalysed reaction is orotidine 5'-phosphate + diphosphate = orotate + 5-phospho-alpha-D-ribose 1-diphosphate. It participates in pyrimidine metabolism; UMP biosynthesis via de novo pathway; UMP from orotate: step 1/2. Catalyzes the transfer of a ribosyl phosphate group from 5-phosphoribose 1-diphosphate to orotate, leading to the formation of orotidine monophosphate (OMP). This is Orotate phosphoribosyltransferase from Coxiella burnetii (strain RSA 493 / Nine Mile phase I).